Here is a 2338-residue protein sequence, read N- to C-terminus: Proto-oncogene tyrosine-protein kinase ROS (2338 aa).

A signal peptide spans 1–27; it reads MKRIRWLTPKPATFVVLGCVWISVAQG. At 28-1853 the chain is on the extracellular side; it reads TILSSCLTSC…EDGFWITETS (1826 aa). Asparagine 52 and asparagine 77 each carry an N-linked (GlcNAc...) asparagine glycan. 2 Fibronectin type-III domains span residues 110–205 and 206–294; these read LPTA…VPET and APFI…PSPA. 6 N-linked (GlcNAc...) asparagine glycosylation sites follow: asparagine 333, asparagine 361, asparagine 480, asparagine 623, asparagine 934, and asparagine 1010. Positions 566-666 constitute a Fibronectin type-III 3 domain; sequence LPGHPQEVSV…EPSVGTTLVP (101 aa). Fibronectin type-III domains lie at 942–1037 and 1038–1145; these read IPDS…SVPS and APEN…TSEI. Asparagine 1298 is a glycosylation site (N-linked (GlcNAc...) asparagine). Fibronectin type-III domains lie at 1440–1548, 1549–1648, 1650–1743, and 1744–1845; these read VASN…TKSG, VPGA…VNMF, TPEK…TKAG, and VPSK…LVED. Asparagine 1675 is a glycosylation site (N-linked (GlcNAc...) asparagine). Residues 1854 to 1874 form a helical membrane-spanning segment; the sequence is FILTIIVGIFLVATVPLTFVW. Residues 1875 to 2338 lie on the Cytoplasmic side of the membrane; that stretch reads HRSLKNHKAT…AHSGHGDVSE (464 aa). One can recognise a Protein kinase domain in the interval 1937–2210; sequence LSLRLLLGSG…YNIQDQLQLF (274 aa). Residues 1943-1951 and lysine 1972 contribute to the ATP site; that span reads LGSGAFGEV. Catalysis depends on aspartate 2071, which acts as the Proton acceptor. Tyrosine 2266 carries the phosphotyrosine; by autocatalysis modification. The interval 2277–2314 is disordered; that stretch reads EDRYEGPLGSKESGLHDLKKDERQPADKDFCQQPQVAY. Residues 2289–2306 show a composition bias toward basic and acidic residues; sequence SGLHDLKKDERQPADKDF. Position 2325 is a phosphotyrosine; by autocatalysis (tyrosine 2325).

The protein belongs to the protein kinase superfamily. Tyr protein kinase family. Insulin receptor subfamily. In terms of assembly, interacts with PTPN11; may activate the PI3 kinase-mTOR signaling pathway. Interacts with VAV3; constitutive interaction mediating VAV3 phosphorylation. Interacts with PTPN6 (via SH2 1 domain); the interaction is direct and promotes ROS1 dephosphorylation. In terms of processing, phosphorylated. Probably autophosphorylates. Phosphorylation at Tyr-2266 is required for the interaction with PTPN6 that mediates ROS1 dephosphorylation. Phosphorylation at Tyr-2266 stimulates the kinase activity and the activation of the ERK1 signaling cascade. Phosphorylation at Tyr-2266 and/or Tyr-2325 recruits PTPN11. As to expression, expressed in heart, lung, kidney and testis.

It localises to the cell membrane. The enzyme catalyses L-tyrosyl-[protein] + ATP = O-phospho-L-tyrosyl-[protein] + ADP + H(+). Its activity is regulated as follows. Inhibited by dephosphorylation by PTPN6. In terms of biological role, orphan receptor tyrosine kinase (RTK) that plays a role in epithelial cell differentiation and regionalization of the proximal epididymal epithelium. NELL2 is an endogenous ligand for ROS1. Upon endogenous stimulation by NELL2, ROS1 activates the intracellular signaling pathway and triggers epididymal epithelial differentiation and subsequent sperm maturation. May activate several downstream signaling pathways related to cell differentiation, proliferation, growth and survival including the PI3 kinase-mTOR signaling pathway. Mediates the phosphorylation of PTPN11, an activator of this pathway. May also phosphorylate and activate the transcription factor STAT3 to control anchorage-independent cell growth. Mediates the phosphorylation and the activation of VAV3, a guanine nucleotide exchange factor regulating cell morphology. May activate other downstream signaling proteins including AKT1, MAPK1, MAPK3, IRS1 and PLCG2. The chain is Proto-oncogene tyrosine-protein kinase ROS (Ros1) from Rattus norvegicus (Rat).